The primary structure comprises 428 residues: Phosphomethylpyrimidine synthase 1 (428 aa).

Residues methionine 94, tyrosine 123, histidine 162, 184-186 (SRG), 225-228 (NGMR), and glutamate 264 each bind substrate. Histidine 268 is a Zn(2+) binding site. Position 291 (tyrosine 291) interacts with substrate. Histidine 332 provides a ligand contact to Zn(2+). Residues cysteine 408, cysteine 411, and cysteine 415 each coordinate [4Fe-4S] cluster.

The protein belongs to the ThiC family. [4Fe-4S] cluster serves as cofactor.

The enzyme catalyses 5-amino-1-(5-phospho-beta-D-ribosyl)imidazole + S-adenosyl-L-methionine = 4-amino-2-methyl-5-(phosphooxymethyl)pyrimidine + CO + 5'-deoxyadenosine + formate + L-methionine + 3 H(+). It functions in the pathway cofactor biosynthesis; thiamine diphosphate biosynthesis. Catalyzes the synthesis of the hydroxymethylpyrimidine phosphate (HMP-P) moiety of thiamine from aminoimidazole ribotide (AIR) in a radical S-adenosyl-L-methionine (SAM)-dependent reaction. The polypeptide is Phosphomethylpyrimidine synthase 1 (Methanosarcina barkeri (strain Fusaro / DSM 804)).